The sequence spans 338 residues: Gibberellin 2-beta-dioxygenase 8 (338 aa).

The 100-residue stretch at 191-290 (NTCYLRMNRY…RFSTAYFMCP (100 aa)) folds into the Fe2OG dioxygenase domain. Fe cation is bound by residues His-215, Asp-217, and His-271. Residue Arg-281 is part of the active site. Arg-281 contacts 2-oxoglutarate.

The protein belongs to the iron/ascorbate-dependent oxidoreductase family. GA2OX subfamily. Requires Fe(2+) as cofactor.

It catalyses the reaction gibberellin A1 + 2-oxoglutarate + O2 = gibberellin A8 + succinate + CO2. It participates in plant hormone biosynthesis; gibberellin biosynthesis. In terms of biological role, catalyzes the 2-beta-hydroxylation of gibberellins (GA) precursors, rendering them unable to be converted to active GAs. Hydroxylates the C20-GA GA12 and GA53, but is not active on C19-GAs, like GA1, GA4, GA9 and GA20. The sequence is that of Gibberellin 2-beta-dioxygenase 8 (GA2OX8) from Arabidopsis thaliana (Mouse-ear cress).